A 670-amino-acid polypeptide reads, in one-letter code: MTFSVQHAEIHFNRNHIPVSDQFNDVYFSNENGLAETDYVFLQGNQLWERWISHNEANFVIAETGFGTGLNFFAVTQLFREFRQQHENHPLKRLNFISFEKYPLKITALSQAHLAYPQFEDLSAHLQRYWPSLILGCHRIHFGETTLDLWLGNVSENLPQLGDYMNERIDAWFLDGFAPSKNPEMWNDDLYKLMFRFTKPNGSFATFTAASAVRKGLESAGFNVTKRKGFGKKRECLSGLKIQSKSTVLSTPWYLAQPAKMEKQDVAIIGGGIASFCAAISLVKRGAKVTIYCEDDALALNASGNKQGAFYPQLSDDNALTVDFYLHAFSYGRQLLDWAIEQNIEFEHEFCGVALCAYNEKSAVKLTKISQLGLPNEIFQMLSAEQLSEKVGLPLNCEGGWIEQGAWLAPRQFVQNAFSFLEKQGVIIKTSQKITALSQQEKGWELENTQGQKYCHEVVILANGYKITDFVQTEKLPLYPIRGQVSQIPTSENLLKLKSVLCYDGYLTPANQLKTSHCIGASHVRDNVDRHFSEQEQQENQQKLQQNIAQPWTQDVNTSDNLARVGIRCSVRDLAPMVGNVPHFEQQQADYYNLFNLRRRKQPIQSAANFQNIFLIAALGSRGLTSAPLLGETLASIIYGEPLPISEGILHNLSANRAWVKKWLKGSKVE.

A tRNA (mnm(5)s(2)U34)-methyltransferase region spans residues 1-242 (MTFSVQHAEI…KRECLSGLKI (242 aa)). Positions 269 to 670 (IGGGIASFCA…KKWLKGSKVE (402 aa)) are FAD-dependent cmnm(5)s(2)U34 oxidoreductase.

This sequence in the N-terminal section; belongs to the methyltransferase superfamily. tRNA (mnm(5)s(2)U34)-methyltransferase family. In the C-terminal section; belongs to the DAO family. The cofactor is FAD.

The protein localises to the cytoplasm. It carries out the reaction 5-aminomethyl-2-thiouridine(34) in tRNA + S-adenosyl-L-methionine = 5-methylaminomethyl-2-thiouridine(34) in tRNA + S-adenosyl-L-homocysteine + H(+). Catalyzes the last two steps in the biosynthesis of 5-methylaminomethyl-2-thiouridine (mnm(5)s(2)U) at the wobble position (U34) in tRNA. Catalyzes the FAD-dependent demodification of cmnm(5)s(2)U34 to nm(5)s(2)U34, followed by the transfer of a methyl group from S-adenosyl-L-methionine to nm(5)s(2)U34, to form mnm(5)s(2)U34. The chain is tRNA 5-methylaminomethyl-2-thiouridine biosynthesis bifunctional protein MnmC from Haemophilus influenzae (strain 86-028NP).